Reading from the N-terminus, the 187-residue chain is Bis(5'-nucleosyl)-tetraphosphatase, symmetrical (187 aa).

One can recognise an HD domain in the interval 18–132 (RYQHTIGVME…IFLADYIEPN (115 aa)). H21 provides a ligand contact to ADP. Fe cation is bound by residues H21, H50, and D51. ADP-binding positions include 51–54 (DYAK), H83, 109–110 (HT), D127, R133, and 170–175 (PIYPDT). D127 lines the Fe cation pocket.

It belongs to the Ap4A hydrolase YqeK family. As to quaternary structure, homodimer.

It carries out the reaction P(1),P(4)-bis(5'-adenosyl) tetraphosphate + H2O = 2 ADP + 2 H(+). Its function is as follows. Hydrolyzes diadenosine 5',5'''-P1,P4-tetraphosphate (Ap4A) to yield ADP. The sequence is that of Bis(5'-nucleosyl)-tetraphosphatase, symmetrical from Halalkalibacterium halodurans (strain ATCC BAA-125 / DSM 18197 / FERM 7344 / JCM 9153 / C-125) (Bacillus halodurans).